Consider the following 285-residue polypeptide: UPF0354 protein SACOL1793 (285 aa).

The protein belongs to the UPF0354 family.

The chain is UPF0354 protein SACOL1793 from Staphylococcus aureus (strain COL).